A 362-amino-acid chain; its full sequence is Variable large protein 25 (362 aa).

A signal peptide spans 1-26 (MRKRISAIINKLNISIMMMIVVLMIG). Residue Cys27 is the site of N-palmitoyl cysteine attachment. Cys27 carries the S-diacylglycerol cysteine lipid modification.

It belongs to the variable large protein (Vlp) family. Alpha subfamily.

It localises to the cell outer membrane. The Vlp and Vsp proteins are antigenically distinct proteins, only one vlp or vsp gene is transcriptionally active at any one time. Switching between these genes is a mechanism of host immune response evasion. The chain is Variable large protein 25 from Borrelia hermsii.